Consider the following 471-residue polypeptide: Alpha-galactosidase (471 aa).

Positions 1–18 (MFLLYLFTSFAAVSGVLG) are cleaved as a signal peptide. Cys-42 and Cys-74 are oxidised to a cystine. Residues Asp-72 and Asp-73 each contribute to the substrate site. A glycan (N-linked (GlcNAc...) asparagine) is linked at Asn-82. A disulfide bridge connects residues Cys-121 and Cys-151. Residue Lys-147 participates in substrate binding. Catalysis depends on Asp-149, which acts as the Nucleophile. N-linked (GlcNAc...) asparagine glycosylation occurs at Asn-175. Arg-205 contacts substrate. The active-site Proton donor is Asp-209. 2 disulfide bridges follow: Cys-221/Cys-237 and Cys-223/Cys-230. A substrate-binding site is contributed by Gln-251. 7 N-linked (GlcNAc...) asparagine glycosylation sites follow: Asn-270, Asn-403, Asn-412, Asn-417, Asn-422, Asn-435, and Asn-454.

This sequence belongs to the glycosyl hydrolase 27 family. Homotetramer.

It localises to the secreted. It catalyses the reaction Hydrolysis of terminal, non-reducing alpha-D-galactose residues in alpha-D-galactosides, including galactose oligosaccharides, galactomannans and galactolipids.. In Saccharomyces pastorianus (strain ATCC 76529 / Carlsberg bottom yeast no.1 / CBS 1513 / CLIB 176 / NBRC 1167 / NCYC 396 / NRRL Y-12693) (Saaz-type lager yeast), this protein is Alpha-galactosidase (MEL).